Reading from the N-terminus, the 453-residue chain is UDP-glycosyltransferase 76E9 (453 aa).

UDP-alpha-D-glucose contacts are provided by residues Ser-279, 337 to 339 (APQ), 354 to 362 (HCGWNSTLE), and 376 to 379 (TTDQ).

The protein belongs to the UDP-glycosyltransferase family.

The sequence is that of UDP-glycosyltransferase 76E9 (UGT76E9) from Arabidopsis thaliana (Mouse-ear cress).